We begin with the raw amino-acid sequence, 289 residues long: D-xylonolactone lactonase (289 aa).

Glu-17 serves as a coordination point for Fe(2+). D-xylono-1,5-lactone is bound by residues Arg-98, Asn-100, Glu-119, and Asn-145. Residues Asn-145 and Asp-195 each contribute to the Fe(2+) site. Asp-195 (proton donor/acceptor) is an active-site residue.

Belongs to the SMP-30/CGR1 family. Fe(2+) is required as a cofactor.

The catalysed reaction is D-xylono-1,5-lactone + H2O = D-xylonate + H(+). Involved in the degradation of D-xylose. Catalyzes the hydrolysis of D-xylonolactone to D-xylonate. This chain is D-xylonolactone lactonase, found in Caulobacter vibrioides (strain ATCC 19089 / CIP 103742 / CB 15) (Caulobacter crescentus).